Here is an 87-residue protein sequence, read N- to C-terminus: HssA/B-like protein 8 (87 aa).

A compositionally biased stretch (polar residues) spans 1–22; it reads MSILSALTSISNPMKSTKSSVA. Residues 1–24 form a disordered region; sequence MSILSALTSISNPMKSTKSSVANG.

Belongs to the hssA/B family.

This is HssA/B-like protein 8 (hssl8) from Dictyostelium discoideum (Social amoeba).